The chain runs to 205 residues: High frequency lysogenization protein HflD homolog (205 aa).

The protein belongs to the HflD family.

It localises to the cytoplasm. The protein localises to the cell inner membrane. This chain is High frequency lysogenization protein HflD homolog, found in Aliivibrio fischeri (strain ATCC 700601 / ES114) (Vibrio fischeri).